Here is a 468-residue protein sequence, read N- to C-terminus: Immunoglobulin superfamily member 21 (468 aa).

The signal sequence occupies residues 1 to 24 (MRAAPSLRRASCLLLAAILDLARG). Ig-like domains lie at 25 to 132 (YLTV…VVLA) and 344 to 429 (PKIM…TRLI). A disulfide bond links cysteine 46 and cysteine 116.

As to quaternary structure, interacts (Ig-like 1 domain) with NRXN2 (via Laminin G-like 1 domain) in a trans-interaction manner. Expressed in brain.

The protein resides in the postsynaptic cell membrane. Functionally, involved in synaptic inhibition in the brain. Selectively regulates inhibitory presynaptic differentiation through interacting with presynaptic NRXN2. The polypeptide is Immunoglobulin superfamily member 21 (Rattus norvegicus (Rat)).